A 433-amino-acid chain; its full sequence is Enolase (433 aa).

Gln167 contacts (2R)-2-phosphoglycerate. Glu209 functions as the Proton donor in the catalytic mechanism. Mg(2+) contacts are provided by Asp246, Glu291, and Asp318. Residues Lys343, Arg372, Ser373, and Lys394 each contribute to the (2R)-2-phosphoglycerate site. Lys343 acts as the Proton acceptor in catalysis.

It belongs to the enolase family. As to quaternary structure, component of the RNA degradosome, a multiprotein complex involved in RNA processing and mRNA degradation. The cofactor is Mg(2+).

It is found in the cytoplasm. The protein localises to the secreted. It localises to the cell surface. The catalysed reaction is (2R)-2-phosphoglycerate = phosphoenolpyruvate + H2O. It functions in the pathway carbohydrate degradation; glycolysis; pyruvate from D-glyceraldehyde 3-phosphate: step 4/5. Catalyzes the reversible conversion of 2-phosphoglycerate (2-PG) into phosphoenolpyruvate (PEP). It is essential for the degradation of carbohydrates via glycolysis. This Photorhabdus laumondii subsp. laumondii (strain DSM 15139 / CIP 105565 / TT01) (Photorhabdus luminescens subsp. laumondii) protein is Enolase.